A 114-amino-acid chain; its full sequence is Cyclin-dependent kinase 2-associated protein 1 (114 aa).

Positions 18-57 (AGSVHSPSTSMATSSQYRQLLSDYGPPSLGYTQGTGNSQV) are disordered. Positions 19–24 (GSVHSP) are interaction with CDK2AP2. Residues 20–36 (SVHSPSTSMATSSQYRQ) show a composition bias toward polar residues. Phosphoserine; by IKKE is present on Ser-45. The segment covering 47 to 57 (GYTQGTGNSQV) has biased composition (polar residues).

The protein belongs to the CDK2AP family. In terms of assembly, homodimer. Component of the nucleosome remodeling and deacetylase (NuRD) repressor complex, composed of core proteins MTA1, MTA2, MTA3, RBBP4, RBBP7, HDAC1, HDAC2, MBD2, MBD3, and peripherally associated proteins CDK2AP1, CDK2AP2, GATAD2A, GATAD2B, CHD3, CHD4 and CHD5. The exact stoichiometry of the NuRD complex is unknown, and some subunits such as MBD2 and MBD3, GATAD2A and GATAD2B, and CHD3, CHD4 and CHD5 define mutually exclusive NuRD complexes. Interacts with monomeric unphosphorylated CDK2. Interacts with CDK2AP2. Interacts with GATAD2A. Interacts with HDAC1. Interacts with HDAC2. Interacts with MBD2. Interacts with MBD3. Interacts with RBBP4. Interacts with RBBP7. Post-translationally, phosphorylated in vitro by IKBKE at Ser-45.

The protein resides in the nucleus. Its subcellular location is the chromosome. Functionally, inhibitor of cyclin-dependent kinase CDK2. Also acts as a component of the histone deacetylase NuRD complex which participates in the remodeling of chromatin. The sequence is that of Cyclin-dependent kinase 2-associated protein 1 (Cdk2ap1) from Mus musculus (Mouse).